The primary structure comprises 159 residues: Ribosomal RNA large subunit methyltransferase H (159 aa).

S-adenosyl-L-methionine is bound by residues L76, G108, and 127–132 (FGLLTL).

It belongs to the RNA methyltransferase RlmH family. As to quaternary structure, homodimer.

The protein localises to the cytoplasm. The catalysed reaction is pseudouridine(1915) in 23S rRNA + S-adenosyl-L-methionine = N(3)-methylpseudouridine(1915) in 23S rRNA + S-adenosyl-L-homocysteine + H(+). Functionally, specifically methylates the pseudouridine at position 1915 (m3Psi1915) in 23S rRNA. In Leuconostoc mesenteroides subsp. mesenteroides (strain ATCC 8293 / DSM 20343 / BCRC 11652 / CCM 1803 / JCM 6124 / NCDO 523 / NBRC 100496 / NCIMB 8023 / NCTC 12954 / NRRL B-1118 / 37Y), this protein is Ribosomal RNA large subunit methyltransferase H.